A 598-amino-acid polypeptide reads, in one-letter code: Thiamine transporter (598 aa).

The Cytoplasmic portion of the chain corresponds to 1–41; sequence MSFGSKVSRALRFLEIPVKDRASVSFLKNPDLQPIKSANQT. Residues 42-62 form a helical membrane-spanning segment; the sequence is WGFWSNFAYWGVMSFSVGTWM. At 63-73 the chain is on the extracellular side; it reads SASSALGVGLS. A helical membrane pass occupies residues 74 to 94; the sequence is YPETIGTFIVGDVLTIIFTLA. The Cytoplasmic segment spans residues 95 to 111; it reads NSCPGYDWKVGFTLAQR. A helical transmembrane segment spans residues 112-132; that stretch reads FVFGIYGSAFGIIIRILMSIV. Topologically, residues 133-173 are extracellular; sequence NYGSNAWVGGLCINMILDSWSHHYLHLPNTLSSKVAMTTKE. Residues 174–194 traverse the membrane as a helical segment; that stretch reads LIGFIIFHVLTAFCYLMKPYH. The Cytoplasmic segment spans residues 195 to 197; it reads MNY. Residues 198–218 traverse the membrane as a helical segment; the sequence is ILIWSCVATFFSMLGMVIYLA. Residues 219 to 240 lie on the Extracellular side of the membrane; that stretch reads KQAHGVGELFTSTKSTATGSTK. Residues 241–261 form a helical membrane-spanning segment; it reads AWAWVYMISYWFGSVSPGSTN. The Cytoplasmic segment spans residues 262 to 274; it reads QSDYSRFGSSNWA. A helical transmembrane segment spans residues 275–295; the sequence is IWAGTICALLIPTTLIPVFGV. At 296-332 the chain is on the extracellular side; the sequence is IGASTCDKLYGEQYWMPMDIFNHWLTTNYSAGARAGA. Residues 333–353 form a helical membrane-spanning segment; the sequence is FFCGLSFVLSQMSYTISNCGF. Residues 354–371 are Cytoplasmic-facing; sequence ASGMDLAGLLPKYVDIKR. Residues 372-392 form a helical membrane-spanning segment; that stretch reads GALFAACVSWACLPWNFYNSS. Topologically, residues 393–394 are extracellular; that stretch reads ST. The helical transmembrane segment at 395–415 threads the bilayer; the sequence is FLTVMSSFGVVMTPIISVMIC. Residues 416-446 lie on the Cytoplasmic side of the membrane; sequence DNFLIRKRQYSITNAFILKGEYYFTKGVNWR. Residues 447 to 467 traverse the membrane as a helical segment; it reads AIVAWVCGMTPGLPGIAWEVN. Over 468-483 the chain is Extracellular; sequence NDYFHNTGIVNFFYGD. The chain crosses the membrane as a helical span at residues 484 to 504; sequence SFFSFLISFFVYWGLCLLFPF. Residues 505 to 598 are Cytoplasmic-facing; sequence KITVKHDDKD…QSSTASEKAA (94 aa). At serine 560 the chain carries Phosphoserine. The interval 574–598 is disordered; it reads NTNEFEIVHHKNNEKQSSTASEKAA. The span at 588–598 shows a compositional bias: polar residues; that stretch reads KQSSTASEKAA.

The protein belongs to the purine-cytosine permease (2.A.39) family.

It localises to the membrane. Functionally, responsible for intake of thiamine. This is Thiamine transporter (THI7) from Saccharomyces cerevisiae (strain ATCC 204508 / S288c) (Baker's yeast).